Consider the following 92-residue polypeptide: Defensin-like protein 294 (92 aa).

Residues Met-1–Ala-26 form the signal peptide. Cystine bridges form between Cys-63/Cys-82, Cys-69/Cys-87, and Cys-75/Cys-89.

It belongs to the DEFL family.

Its subcellular location is the secreted. The polypeptide is Defensin-like protein 294 (Arabidopsis thaliana (Mouse-ear cress)).